A 497-amino-acid polypeptide reads, in one-letter code: 3-octaprenyl-4-hydroxybenzoate carboxy-lyase (497 aa).

Position 175 (Asn175) interacts with Mn(2+). Prenylated FMN-binding positions include 178–180 (IYR), 192–194 (RWL), and 197–198 (RG). Glu241 contacts Mn(2+). Residue Asp290 is the Proton donor of the active site.

Belongs to the UbiD family. Homohexamer. Prenylated FMN is required as a cofactor. The cofactor is Mn(2+).

The protein resides in the cell membrane. It catalyses the reaction a 4-hydroxy-3-(all-trans-polyprenyl)benzoate + H(+) = a 2-(all-trans-polyprenyl)phenol + CO2. It participates in cofactor biosynthesis; ubiquinone biosynthesis. Its function is as follows. Catalyzes the decarboxylation of 3-octaprenyl-4-hydroxy benzoate to 2-octaprenylphenol, an intermediate step in ubiquinone biosynthesis. This chain is 3-octaprenyl-4-hydroxybenzoate carboxy-lyase, found in Shigella flexneri.